Reading from the N-terminus, the 487-residue chain is 3-octaprenyl-4-hydroxybenzoate carboxy-lyase (487 aa).

Residue Asn-172 coordinates Mn(2+). Prenylated FMN contacts are provided by residues 175–177 (IYR), 189–191 (RWL), and 194–195 (RG). Glu-238 serves as a coordination point for Mn(2+). Catalysis depends on Asp-287, which acts as the Proton donor.

This sequence belongs to the UbiD family. Homohexamer. Prenylated FMN is required as a cofactor. Requires Mn(2+) as cofactor.

Its subcellular location is the cell membrane. The enzyme catalyses a 4-hydroxy-3-(all-trans-polyprenyl)benzoate + H(+) = a 2-(all-trans-polyprenyl)phenol + CO2. Its pathway is cofactor biosynthesis; ubiquinone biosynthesis. Functionally, catalyzes the decarboxylation of 3-octaprenyl-4-hydroxy benzoate to 2-octaprenylphenol, an intermediate step in ubiquinone biosynthesis. This is 3-octaprenyl-4-hydroxybenzoate carboxy-lyase from Blochmanniella pennsylvanica (strain BPEN).